The sequence spans 541 residues: Protopine 6-monooxygenase (541 aa).

Residues 9–29 (LLLNTWISAYSMAALLALVLV) form a helical membrane-spanning segment. Cysteine 476 contacts heme.

The protein belongs to the cytochrome P450 family. Heme serves as cofactor.

It is found in the endoplasmic reticulum membrane. The catalysed reaction is protopine + reduced [NADPH--hemoprotein reductase] + O2 = 6-hydroxyprotopine + oxidized [NADPH--hemoprotein reductase] + H2O + H(+). It participates in alkaloid biosynthesis. Its function is as follows. Catalyzes the conversion of protopine and allocryptopine to dihydrosanguinarine and dihydrochelerythrine, respectively, in the biosynthesis of isoquinoline alkaloid sanguinarine. The polypeptide is Protopine 6-monooxygenase (CYP82N3) (Papaver somniferum (Opium poppy)).